The following is a 246-amino-acid chain: Sensory transduction protein LytT (246 aa).

Residues 3-117 (KVLVVDDEML…RIVQTLKKYK (115 aa)) form the Response regulatory domain. One can recognise an HTH LytTR-type domain in the interval 142 to 246 (LALPIEESIV…AKELKKLLRI (105 aa)).

In terms of processing, phosphorylated by LytS.

It localises to the cytoplasm. Functionally, member of the two-component regulatory system LytS/LytT that probably regulates genes involved in cell wall metabolism. This is Sensory transduction protein LytT (lytT) from Bacillus cereus (strain ATCC 14579 / DSM 31 / CCUG 7414 / JCM 2152 / NBRC 15305 / NCIMB 9373 / NCTC 2599 / NRRL B-3711).